Reading from the N-terminus, the 300-residue chain is Ribonuclease Z (300 aa).

H63, H65, D67, H68, H140, D207, and H265 together coordinate Zn(2+). D67 serves as the catalytic Proton acceptor.

This sequence belongs to the RNase Z family. As to quaternary structure, homodimer. Zn(2+) serves as cofactor.

It catalyses the reaction Endonucleolytic cleavage of RNA, removing extra 3' nucleotides from tRNA precursor, generating 3' termini of tRNAs. A 3'-hydroxy group is left at the tRNA terminus and a 5'-phosphoryl group is left at the trailer molecule.. Functionally, zinc phosphodiesterase, which displays some tRNA 3'-processing endonuclease activity. Probably involved in tRNA maturation, by removing a 3'-trailer from precursor tRNA. The polypeptide is Ribonuclease Z (Ignicoccus hospitalis (strain KIN4/I / DSM 18386 / JCM 14125)).